A 350-amino-acid chain; its full sequence is GTPase Obg (350 aa).

An Obg domain is found at 1-175; it reads MFVDNIRIFA…GVFFMELRRI (175 aa). Residues 176–345 enclose the OBG-type G domain; the sequence is ADAGLVGYPN…LRNRLDELVG (170 aa). GTP is bound by residues 182–189, 207–211, 229–232, 299–302, and 326–328; these read GYPNAGKS, FTTLQ, DIPG, NKMD, and SAL. Ser-189 and Thr-209 together coordinate Mg(2+).

It belongs to the TRAFAC class OBG-HflX-like GTPase superfamily. OBG GTPase family. In terms of assembly, monomer. Mg(2+) serves as cofactor.

The protein resides in the cytoplasm. An essential GTPase which binds GTP, GDP and possibly (p)ppGpp with moderate affinity, with high nucleotide exchange rates and a fairly low GTP hydrolysis rate. Plays a role in control of the cell cycle, stress response, ribosome biogenesis and in those bacteria that undergo differentiation, in morphogenesis control. This Akkermansia muciniphila (strain ATCC BAA-835 / DSM 22959 / JCM 33894 / BCRC 81048 / CCUG 64013 / CIP 107961 / Muc) protein is GTPase Obg.